The primary structure comprises 641 residues: Frizzled-1 (641 aa).

Residues 1–68 (MAEEAVPSES…WLLEAPLLLG (68 aa)) form the signal peptide. The Extracellular segment spans residues 69–316 (VRAQPAGQVS…PEELRFSRTW (248 aa)). Residues 74–99 (AGQVSGPGQQRPPPPQPQQGGQQYNG) form a disordered region. Residues 106 to 224 (PDHGYCQPIS…HGAGELCVGQ (119 aa)) form the FZ domain. 5 disulfides stabilise this stretch: Cys-111–Cys-172, Cys-119–Cys-165, Cys-156–Cys-192, Cys-182–Cys-221, and Cys-186–Cys-209. Residue Asn-125 is glycosylated (N-linked (GlcNAc...) asparagine). A glycan (N-linked (GlcNAc...) asparagine) is linked at Asn-225. A helical transmembrane segment spans residues 317–337 (IGIWSVLCCASTLFTVLTYLV). The Cytoplasmic portion of the chain corresponds to 338–348 (DMRRFSYPERP). Residues 349 to 369 (IIFLSGCYTAVAVAYIAGFLL) form a helical membrane-spanning segment. The Extracellular segment spans residues 370-396 (EDRVVCNDKFAEDGARTVAQGTKKEGC). A helical transmembrane segment spans residues 397–417 (TILFMMLYFFSMASSIWWVIL). Residues 418-439 (SLTWFLAAGMKWGHEAIEANSQ) are Cytoplasmic-facing. A helical transmembrane segment spans residues 440–460 (YFHLAAWAVPAIKTITILALG). Residues 461 to 483 (QVDGDVLSGVCFVGLNNVDALRG) lie on the Extracellular side of the membrane. The chain crosses the membrane as a helical span at residues 484–504 (FVLAPLFVYLFIGTSFLLAGF). The Cytoplasmic segment spans residues 505–530 (VSLFRIRTIMKHDGTKTEKLEKLMVR). A helical transmembrane segment spans residues 531-551 (IGVFSVLYTVPATIVIACYFY). The Extracellular portion of the chain corresponds to 552–595 (EQAFRDQWERSWVAQSCKSYAIPCPHLQGGGGVPPHPPMSPDFT). A helical transmembrane segment spans residues 596–616 (VFMIKYLMTLIVGITSGFWIW). Residues 617–641 (SGKTLNSWRKFYTRLTNSKQGETTV) lie on the Cytoplasmic side of the membrane. Positions 619-624 (KTLNSW) match the Lys-Thr-X-X-X-Trp motif, mediates interaction with the PDZ domain of Dvl family members motif. A PDZ-binding motif is present at residues 639 to 641 (TTV).

This sequence belongs to the G-protein coupled receptor Fz/Smo family. As to quaternary structure, interacts with MYOC. Interacts with WNT7B. In terms of processing, ubiquitinated by ZNRF3, leading to its degradation by the proteasome. In terms of tissue distribution, widely expressed. Most abundant in kidney, liver, uterus, ovary and heart. Lower levels seen in brain and intestine. Extremely low in calvaria, mammary glands and testis.

The protein localises to the cell membrane. Its function is as follows. Receptor for Wnt proteins. Activated by WNT3A, WNT3, WNT1 and to a lesser extent WNT2, but apparently not by WNT4, WNT5A, WNT5B, WNT6 or WNT7A. Contradictory results have been reported for activation by WNT7B. Functions in the canonical Wnt/beta-catenin signaling pathway. The canonical Wnt/beta-catenin signaling pathway leads to the activation of disheveled proteins, inhibition of GSK-3 kinase, nuclear accumulation of beta-catenin and activation of Wnt target genes. A second signaling pathway involving PKC and calcium fluxes has been seen for some family members, but it is not yet clear if it represents a distinct pathway or if it can be integrated in the canonical pathway, as PKC seems to be required for Wnt-mediated inactivation of GSK-3 kinase. Both pathways seem to involve interactions with G-proteins. May be involved in transduction and intercellular transmission of polarity information during tissue morphogenesis and/or in differentiated tissues. This chain is Frizzled-1 (Fzd1), found in Rattus norvegicus (Rat).